Consider the following 124-residue polypeptide: Small ribosomal subunit protein uS12 (124 aa).

Aspartate 89 is modified (3-methylthioaspartic acid).

The protein belongs to the universal ribosomal protein uS12 family. In terms of assembly, part of the 30S ribosomal subunit. Contacts proteins S8 and S17. May interact with IF1 in the 30S initiation complex.

With S4 and S5 plays an important role in translational accuracy. Its function is as follows. Interacts with and stabilizes bases of the 16S rRNA that are involved in tRNA selection in the A site and with the mRNA backbone. Located at the interface of the 30S and 50S subunits, it traverses the body of the 30S subunit contacting proteins on the other side and probably holding the rRNA structure together. The combined cluster of proteins S8, S12 and S17 appears to hold together the shoulder and platform of the 30S subunit. The protein is Small ribosomal subunit protein uS12 of Hamiltonella defensa subsp. Acyrthosiphon pisum (strain 5AT).